A 363-amino-acid chain; its full sequence is MGFRLSHLSLALSFVALALAGVAIYRNTYEAIIMNNGSLLQNASPHFDSLESGVASILTLNNKKRNSDMYLRQQLTPEACVFSAVRGVVDSAIDAETRMGASLIRLHFHDCFVDGCDGGILLDDINGTFTGEQNSPPNANSARGYEVIAQAKQSVIDTCPNISVSCADILAIAARDSVAKLGGQTYNVALGRSDARTANFTGALTQLPAPFDNLTVQIQKFNDKNFTLREMVALAGAHTVGFARCSTVCTSGNVNPAAQLQCNCSATLTDSDLQQLDTTPTMFDKVYYDNLNNNQGIMFSDQVLTGDATTAGFVTDYSNDVSVFLGDFAAAMIKMGDLPPSAGAQLEIRDVCSRVNPTSVASM.

The first 20 residues, 1–20 (MGFRLSHLSLALSFVALALA), serve as a signal peptide directing secretion. Asparagine 36 carries N-linked (GlcNAc...) asparagine glycosylation. Disulfide bonds link cysteine 80–cysteine 159 and cysteine 111–cysteine 116. Histidine 109 (proton acceptor) is an active-site residue. Positions 110, 113, 115, and 117 each coordinate Ca(2+). N-linked (GlcNAc...) asparagine glycans are attached at residues asparagine 126, asparagine 161, and asparagine 199. Intrachain disulfides connect cysteine 166–cysteine 352 and cysteine 245–cysteine 264. Proline 208 contributes to the substrate binding site. Residues asparagine 213 and asparagine 225 are each glycosylated (N-linked (GlcNAc...) asparagine). Histidine 238 contacts heme b. Residue threonine 239 coordinates Ca(2+). Residue asparagine 263 is glycosylated (N-linked (GlcNAc...) asparagine). Positions 277, 279, and 284 each coordinate Ca(2+).

The protein belongs to the peroxidase family. Classical plant (class III) peroxidase subfamily. Ca(2+) serves as cofactor. Requires heme b as cofactor.

It localises to the secreted. It carries out the reaction 2 a phenolic donor + H2O2 = 2 a phenolic radical donor + 2 H2O. In terms of biological role, removal of H(2)O(2), oxidation of toxic reductants, biosynthesis and degradation of lignin, suberization, auxin catabolism, response to environmental stresses such as wounding, pathogen attack and oxidative stress. These functions might be dependent on each isozyme/isoform in each plant tissue. Functionally, suggested to catalyze the deposition of the aromatic residues of suberin on the cell wall and thus play a role in cell-suberization. The sequence is that of Suberization-associated anionic peroxidase from Solanum tuberosum (Potato).